The following is a 372-amino-acid chain: MNRSIDLSMYSVRTDLAIEAHEIAVEERLQQKRESASPIEGVIIHDREIDGIKLSHVEVTEEGAKSIGKKPGNYLTIEAQGIREHNTELQQKVQDIFAKEFNAFLRKLDIRKESSCLVVGLGNSNVTPDALGPLTVENLLITRHLFHLQPESVEEGFRPVSAIAPGVMGTTGIETSDIIHGIVEKTKPDFVIVIDALAARSIERVNATIQISDTGIHPGSGVGNKRKELSKETLGIPVISIGVPTVVDAVSITSDTIDFILKHFGREMREGKRPSSALAPAGWTFGKKKRLTEEDMPSTEQRSTFLGIIGTLEEEEKRRLIYEVLSPLGHNLMVTPKEVDMFIEDMANLLASGLNAALHEQIDQDNTGSYTH.

Residues 1–15 constitute a propeptide that is removed on maturation; sequence MNRSIDLSMYSVRTD.

Belongs to the peptidase A25 family. Homotetramer. Autoproteolytically processed. The inactive tetrameric zymogen termed p46 autoprocesses to a smaller form termed p41, which is active only during spore germination.

It catalyses the reaction Endopeptidase action with P4 Glu or Asp, P1 preferably Glu &gt; Asp, P1' hydrophobic and P2' Ala.. Initiates the rapid degradation of small, acid-soluble proteins during spore germination. This is Germination protease from Geobacillus sp. (strain WCH70).